The following is a 391-amino-acid chain: Processive diacylglycerol beta-glucosyltransferase (391 aa).

This sequence belongs to the glycosyltransferase 28 family. UgtP subfamily.

It localises to the cell membrane. The enzyme catalyses a 1,2-diacyl-3-O-(beta-D-glucopyranosyl)-sn-glycerol + UDP-alpha-D-glucose = a 1,2-diacyl-3-O-(beta-D-Glc-(1-&gt;6)-beta-D-Glc)-sn-glycerol + UDP + H(+). The catalysed reaction is a 1,2-diacyl-sn-glycerol + UDP-alpha-D-glucose = a 1,2-diacyl-3-O-(beta-D-glucopyranosyl)-sn-glycerol + UDP + H(+). The protein operates within glycolipid metabolism; diglucosyl-diacylglycerol biosynthesis. Its function is as follows. Processive glucosyltransferase involved in the biosynthesis of both the bilayer- and non-bilayer-forming membrane glucolipids. Is able to successively transfer two glucosyl residues to diacylglycerol (DAG), thereby catalyzing the formation of beta-monoglucosyl-DAG (3-O-(beta-D-glucopyranosyl)-1,2-diacyl-sn-glycerol) and beta-diglucosyl-DAG (3-O-(beta-D-glucopyranosyl-beta-(1-&gt;6)-D-glucopyranosyl)-1,2-diacyl-sn-glycerol). Beta-diglucosyl-DAG is the predominant glycolipid found in Bacillales and is also used as a membrane anchor for lipoteichoic acid (LTA). In Staphylococcus aureus (strain Mu3 / ATCC 700698), this protein is Processive diacylglycerol beta-glucosyltransferase.